Here is a 1106-residue protein sequence, read N- to C-terminus: Carbamoyl phosphate synthase large chain (1106 aa).

Residues 1–402 are carboxyphosphate synthetic domain; sequence MPKREDLKSV…ALQKALRSLE (402 aa). Positions 129, 169, 175, 176, 208, 210, 215, 241, 242, 243, 285, and 299 each coordinate ATP. Residues 133-328 form the ATP-grasp 1 domain; it reads KGVVERCGAE…IAKIATKLSL (196 aa). Residues glutamine 285, glutamate 299, and asparagine 301 each coordinate Mg(2+). Mn(2+) is bound by residues glutamine 285, glutamate 299, and asparagine 301. Residues 403–546 form an oligomerization domain region; sequence QKGSQLDFGS…YHYSSYDQED (144 aa). A carbamoyl phosphate synthetic domain region spans residues 547–956; the sequence is EIALHEKPSV…AFAKSQAAAN (410 aa). Residues 677 to 868 form the ATP-grasp 2 domain; the sequence is ARVLDIAGLI…LAKAAALIGT (192 aa). ATP-binding residues include arginine 713, arginine 752, leucine 754, glutamate 759, glycine 784, isoleucine 785, histidine 786, serine 787, glutamine 827, and glutamate 839. The Mg(2+) site is built by glutamine 827, glutamate 839, and asparagine 841. Mn(2+)-binding residues include glutamine 827, glutamate 839, and asparagine 841. An MGS-like domain is found at 957-1106; that stretch reads NALPTEGKVF…EALLEAAANV (150 aa). The allosteric domain stretch occupies residues 957-1106; it reads NALPTEGKVF…EALLEAAANV (150 aa).

This sequence belongs to the CarB family. Composed of two chains; the small (or glutamine) chain promotes the hydrolysis of glutamine to ammonia, which is used by the large (or ammonia) chain to synthesize carbamoyl phosphate. Tetramer of heterodimers (alpha,beta)4. It depends on Mg(2+) as a cofactor. The cofactor is Mn(2+).

It catalyses the reaction hydrogencarbonate + L-glutamine + 2 ATP + H2O = carbamoyl phosphate + L-glutamate + 2 ADP + phosphate + 2 H(+). The catalysed reaction is hydrogencarbonate + NH4(+) + 2 ATP = carbamoyl phosphate + 2 ADP + phosphate + 2 H(+). Its pathway is amino-acid biosynthesis; L-arginine biosynthesis; carbamoyl phosphate from bicarbonate: step 1/1. The protein operates within pyrimidine metabolism; UMP biosynthesis via de novo pathway; (S)-dihydroorotate from bicarbonate: step 1/3. Its function is as follows. Large subunit of the glutamine-dependent carbamoyl phosphate synthetase (CPSase). CPSase catalyzes the formation of carbamoyl phosphate from the ammonia moiety of glutamine, carbonate, and phosphate donated by ATP, constituting the first step of 2 biosynthetic pathways, one leading to arginine and/or urea and the other to pyrimidine nucleotides. The large subunit (synthetase) binds the substrates ammonia (free or transferred from glutamine from the small subunit), hydrogencarbonate and ATP and carries out an ATP-coupled ligase reaction, activating hydrogencarbonate by forming carboxy phosphate which reacts with ammonia to form carbamoyl phosphate. In Renibacterium salmoninarum (strain ATCC 33209 / DSM 20767 / JCM 11484 / NBRC 15589 / NCIMB 2235), this protein is Carbamoyl phosphate synthase large chain.